Consider the following 77-residue polypeptide: Small ribosomal subunit protein bS18 (77 aa).

This sequence belongs to the bacterial ribosomal protein bS18 family. In terms of assembly, part of the 30S ribosomal subunit. Forms a tight heterodimer with protein bS6.

Binds as a heterodimer with protein bS6 to the central domain of the 16S rRNA, where it helps stabilize the platform of the 30S subunit. This is Small ribosomal subunit protein bS18 from Halalkalibacterium halodurans (strain ATCC BAA-125 / DSM 18197 / FERM 7344 / JCM 9153 / C-125) (Bacillus halodurans).